The sequence spans 473 residues: Ribulose bisphosphate carboxylase large chain 2 (473 aa).

Substrate-binding residues include N116 and T166. Catalysis depends on K168, which acts as the Proton acceptor. A substrate-binding site is contributed by K170. The Mg(2+) site is built by K194, D196, and E197. Residue K194 is modified to N6-carboxylysine. Catalysis depends on H287, which acts as the Proton acceptor. 3 residues coordinate substrate: R288, H320, and S372.

Belongs to the RuBisCO large chain family. Type I subfamily. In terms of assembly, heterohexadecamer of 8 large chains and 8 small chains. Mg(2+) serves as cofactor.

It carries out the reaction 2 (2R)-3-phosphoglycerate + 2 H(+) = D-ribulose 1,5-bisphosphate + CO2 + H2O. The enzyme catalyses D-ribulose 1,5-bisphosphate + O2 = 2-phosphoglycolate + (2R)-3-phosphoglycerate + 2 H(+). Its function is as follows. RuBisCO catalyzes two reactions: the carboxylation of D-ribulose 1,5-bisphosphate, the primary event in carbon dioxide fixation, as well as the oxidative fragmentation of the pentose substrate. Both reactions occur simultaneously and in competition at the same active site. The sequence is that of Ribulose bisphosphate carboxylase large chain 2 from Acidithiobacillus ferrooxidans (strain ATCC 23270 / DSM 14882 / CIP 104768 / NCIMB 8455) (Ferrobacillus ferrooxidans (strain ATCC 23270)).